The following is a 386-amino-acid chain: Cobalt-precorrin-5B C(1)-methyltransferase (386 aa).

This sequence belongs to the CbiD family.

The catalysed reaction is Co-precorrin-5B + S-adenosyl-L-methionine = Co-precorrin-6A + S-adenosyl-L-homocysteine. The protein operates within cofactor biosynthesis; adenosylcobalamin biosynthesis; cob(II)yrinate a,c-diamide from sirohydrochlorin (anaerobic route): step 6/10. In terms of biological role, catalyzes the methylation of C-1 in cobalt-precorrin-5B to form cobalt-precorrin-6A. The chain is Cobalt-precorrin-5B C(1)-methyltransferase from Prochlorococcus marinus (strain MIT 9303).